Consider the following 521-residue polypeptide: Feruloyl esterase B (521 aa).

The N-terminal stretch at 1-17 (MKVASLLSLALPGAALA) is a signal peptide. 2 cysteine pairs are disulfide-bonded: Cys-26–Cys-72 and Cys-61–Cys-111. N-linked (GlcNAc...) asparagine glycans are attached at residues Asn-37, Asn-51, Asn-77, Asn-95, Asn-144, and Asn-177. Intrachain disulfides connect Cys-184-Cys-438, Cys-253-Cys-270, and Cys-279-Cys-288. Ser-185 (acyl-ester intermediate) is an active-site residue. Asp-254, Asp-257, Ala-259, Asp-261, and Ile-263 together coordinate Ca(2+). 4 N-linked (GlcNAc...) asparagine glycosylation sites follow: Asn-284, Asn-347, Asn-352, and Asn-378. Catalysis depends on charge relay system residues Asp-397 and His-437. N-linked (GlcNAc...) asparagine glycosylation is found at Asn-488 and Asn-511. A disulfide bond links Cys-498 and Cys-520.

This sequence belongs to the tannase family. As to quaternary structure, homodimer. Post-translationally, glycosylated.

The protein localises to the secreted. The catalysed reaction is feruloyl-polysaccharide + H2O = ferulate + polysaccharide.. With respect to regulation, inhibited by the specific serine esterase inhibitor AEBSF. Functionally, involved in degradation of plant cell walls. Hydrolyzes of the feruloyl-arabinose ester bond in arabinoxylans as well as the feruloyl-galactose and feruloyl-arabinose ester bonds in pectin. The protein is Feruloyl esterase B (faeB) of Aspergillus niger.